Here is a 246-residue protein sequence, read N- to C-terminus: UPF0736 protein GK0808 (246 aa).

Belongs to the UPF0736 family.

The chain is UPF0736 protein GK0808 from Geobacillus kaustophilus (strain HTA426).